Here is a 428-residue protein sequence, read N- to C-terminus: Probable oxidoreductase OrdL (428 aa).

The polypeptide is Probable oxidoreductase OrdL (ordL) (Rhizobium meliloti (strain 1021) (Ensifer meliloti)).